Reading from the N-terminus, the 196-residue chain is Putative 3-methyladenine DNA glycosylase (196 aa).

Belongs to the DNA glycosylase MPG family.

The chain is Putative 3-methyladenine DNA glycosylase from Bacillus licheniformis (strain ATCC 14580 / DSM 13 / JCM 2505 / CCUG 7422 / NBRC 12200 / NCIMB 9375 / NCTC 10341 / NRRL NRS-1264 / Gibson 46).